The following is a 100-amino-acid chain: MFAVIKTGGKQYKVAENDVIDIEKLEADEGATVEFDSVLALGDTVGLPTIAGAKVTGEVLSQFRGEKVIIFKKHRRQNYRRKNGHRQFLTRVRITGFAGV.

It belongs to the bacterial ribosomal protein bL21 family. Part of the 50S ribosomal subunit. Contacts protein L20.

Functionally, this protein binds to 23S rRNA in the presence of protein L20. This chain is Large ribosomal subunit protein bL21, found in Rhodospirillum rubrum (strain ATCC 11170 / ATH 1.1.1 / DSM 467 / LMG 4362 / NCIMB 8255 / S1).